Reading from the N-terminus, the 307-residue chain is O-acetylserine dependent cystathionine beta-synthase (307 aa).

An N6-(pyridoxal phosphate)lysine modification is found at Lys44. Pyridoxal 5'-phosphate contacts are provided by residues Asn74, 178–182 (GSGGT), and Ser265.

This sequence belongs to the cysteine synthase/cystathionine beta-synthase family. The cofactor is pyridoxal 5'-phosphate.

It catalyses the reaction O-acetyl-L-serine + L-homocysteine = L,L-cystathionine + acetate + H(+). Its function is as follows. Catalyzes the conversion of O-acetylserine and homocysteine to cystathionine. The protein is O-acetylserine dependent cystathionine beta-synthase (mccA) of Bacillus subtilis (strain 168).